The chain runs to 706 residues: Kinesin-like protein KIF2A (706 aa).

Positions 1 to 217 (MATANFGKIQ…LDYRPLTTAD (217 aa)) are globular. Residues 66 to 139 (LVPDEEIEPS…AQQNGSVSDI (74 aa)) are disordered. Residue Ser75 is modified to Phosphoserine. A phosphothreonine mark is found at Thr78 and Thr97. A Phosphoserine modification is found at Ser100. The residue at position 102 (Lys102) is an N6-acetyllysine. A compositionally biased stretch (polar residues) spans 123–139 (FPEQSSSAQQNGSVSDI). A phosphoserine mark is found at Ser135 and Ser140. The tract at residues 165 to 186 (KLQEKREKRRLQQQELREKRAQ) is disordered. One can recognise a Kinesin motor domain in the interval 223–553 (RICVCVRKRP…LRYANRVKEL (331 aa)). An ATP-binding site is contributed by 313–320 (GQTGSGKT). Residues Asp556 and Gln573 each carry the phosphoserine modification. A coiled-coil region spans residues 660–699 (ATQLEAILEQKIDILTELRDKVKSFRAALQEEEQASKQIN).

The protein belongs to the TRAFAC class myosin-kinesin ATPase superfamily. Kinesin family. MCAK/KIF2 subfamily. In terms of assembly, interacts with AURKA and PLK1. Interacts with PSRC1. Interacts with MCRS1; the interaction enhances recruitment of KIF2A to the minus ends of spindle microtubules which promotes chromosome alignment.

The protein resides in the cytoplasm. It is found in the cytoskeleton. It localises to the microtubule organizing center. The protein localises to the centrosome. Its subcellular location is the spindle pole. The protein resides in the spindle. Plus end-directed microtubule-dependent motor required for normal brain development. May regulate microtubule dynamics during axonal growth. Required for normal progression through mitosis. Required for normal congress of chromosomes at the metaphase plate. Required for normal spindle dynamics during mitosis. Promotes spindle turnover. Implicated in formation of bipolar mitotic spindles. Has microtubule depolymerization activity. The polypeptide is Kinesin-like protein KIF2A (KIF2A) (Homo sapiens (Human)).